A 130-amino-acid chain; its full sequence is uncharacterized protein (130 aa).

This is an uncharacterized protein from Acanthamoeba polyphaga mimivirus (APMV).